The chain runs to 1854 residues: Dystrophin, isoform D (1854 aa).

Disordered regions lie at residues 1–65, 84–161, 240–352, 516–548, 595–650, 716–740, 783–830, and 1012–1036; these read MTTT…PIYA, GSTT…YEMP, QSPT…MSPA, LKPT…PTPS, TPGG…TSES, VMSK…PSTA, LKLQ…STTP, and VSDT…EQSR. 2 stretches are compositionally biased toward low complexity: residues 11–37 and 84–96; these read QRQQ…QQHQ and GSTT…LQSS. Positions 143–157 are enriched in polar residues; sequence GLSSAQPATSASSGN. The span at 276–296 shows a compositional bias: low complexity; it reads QQQQQQQQAGINGQINGNGNQ. Polar residues-rich tracts occupy residues 331 to 345 and 518 to 536; these read TLSR…SSAD and PTST…SNTA. Residues 595–606 show a composition bias toward gly residues; that stretch reads TPGGGVVGGQAA. Over residues 716–727 the composition is skewed to polar residues; the sequence is VMSKSNSSLGSV. Composition is skewed to low complexity over residues 728–740 and 783–814; these read TTPS…PSTA and LKLQ…QQIQ. Polar residues predominate over residues 815 to 830; sequence NGFASDDNSSSCSTTP. Spectrin repeat units lie at residues 936-1069 and 1072-1176; these read EHWN…RLDE and TKMR…VLCQ. The segment at 1179 to 1209 is disordered; the sequence is AQQTHENGDDGRTTSNSGTIGPLPNLGQSVK. The WW domain occupies 1206 to 1239; sequence QSVKPPWERATTAANVPYYIDHERETTHWDHPEM. The ZZ-type zinc-finger motif lies at 1464–1520; sequence KHQAKCNICKEYPIVGFRYRCLKCFNFDMCQKCFFFGRNAKNHKLTHPMHEYCTTTT. Zn(2+)-binding residues include Cys-1469, Cys-1472, Cys-1484, Cys-1487, Cys-1493, Cys-1496, His-1506, and His-1510. Residue Ser-1564 is modified to Phosphoserine. Disordered stretches follow at residues 1673–1701 and 1744–1854; these read EQSG…GEQG and DEPN…ELQK. 2 stretches are compositionally biased toward polar residues: residues 1682-1694 and 1765-1796; these read NGMQ…MTGL and ALNS…QQNG. Acidic residues predominate over residues 1815 to 1826; sequence QELESINDDLED. Positions 1827-1845 are enriched in low complexity; it reads SSSSNTTNTTTTTTTTATT.

As to quaternary structure, component of the dystrophin associated protein complex (DAPC). Interacts with Dg, via the Dg WW domain binding sites. During embryogenesis and in third instar larvae, expression is seen in pericardial cells of the dorsal vessel and in the ventral nerve cord. Expression is absent from both the embryonic and larval musculature.

The protein resides in the cell membrane. Its subcellular location is the sarcolemma. The protein localises to the cytoplasm. It is found in the cytoskeleton. In terms of biological role, required for the maintenance of appropriate synaptic retrograde communication and the stabilization of muscle cell architecture or physiology. May play a role in anchoring the cytoskeleton to the plasma membrane. The polypeptide is Dystrophin, isoform D (Dys) (Drosophila melanogaster (Fruit fly)).